Consider the following 633-residue polypeptide: ATP-dependent clpX-like chaperone, mitochondrial (633 aa).

The N-terminal 56 residues, 1–56 (MPSCGACTCGAAAVRLITSSLASAQRGISGGRIHMSVLGRLGTFETQILQRAPLRS), are a transit peptide targeting the mitochondrion. The tract at residues 68-100 (DGISKDGSGDGNKKSASEGSSKKSGSGNSGKGG) is disordered. The segment covering 69–83 (GISKDGSGDGNKKSA) has biased composition (basic and acidic residues). A compositionally biased stretch (low complexity) spans 84–93 (SEGSSKKSGS). One can recognise a ClpX-type ZB domain in the interval 93 to 146 (SGNSGKGGNQLRCPKCGDLCTHVETFVSSTRFVKCEKCHHFFVVLSEADSKKSI). The Zn(2+) site is built by cysteine 105, cysteine 108, cysteine 127, and cysteine 130. 294 to 301 (PTGSGKTL) lines the ATP pocket. Lysine 437 carries the post-translational modification N6-acetyllysine. Residues 598 to 610 (KEPGYIRAPTKES) show a composition bias toward basic and acidic residues. The interval 598–633 (KEPGYIRAPTKESSEEEYDSGVEEEGWPRQADAANS) is disordered. A compositionally biased stretch (acidic residues) spans 611 to 622 (SEEEYDSGVEEE). Serine 617 bears the Phosphoserine mark.

The protein belongs to the ClpX chaperone family. In terms of assembly, homohexamer that forms a ring structure; this hexamerization requires ATP binding. Component of the ClpXP complex formed by the assembly of two CLPP heptameric rings with two CLPX hexameric rings, giving rise to a symmetrical structure with two central CLPP rings flanked by a CLPX ring at either end of the complex. Interacts with TFAM. As to expression, higher expression in skeletal muscle and heart and to a lesser extent in liver, brain, placenta, lung, kidney and pancreas.

Its subcellular location is the mitochondrion. The protein localises to the mitochondrion matrix. It localises to the mitochondrion nucleoid. It catalyses the reaction ATP + H2O = ADP + phosphate + H(+). In terms of biological role, ATP-dependent chaperone that functions as an unfoldase. As part of the ClpXP protease complex, it recognizes specific protein substrates, unfolds them using energy derived from ATP hydrolysis, and then translocates them to the proteolytic subunit (CLPP) of the ClpXP complex for degradation. Thanks to its chaperone activity, it also functions in the incorporation of the pyridoxal phosphate cofactor into 5-aminolevulinate synthase, thereby activating 5-aminolevulinate (ALA) synthesis, the first step in heme biosynthesis. This chaperone is also involved in the control of mtDNA nucleoid distribution, by regulating mitochondrial transcription factor A (TFAM) activity. This Homo sapiens (Human) protein is ATP-dependent clpX-like chaperone, mitochondrial.